We begin with the raw amino-acid sequence, 193 residues long: MEHKLVVVTGVPGVGGTTITQKAMEILKEENINYKMVNFGTAMFEVAQSQNIVEDRDEMRKLDADTQKRIQKMAGRKIAEMVKEQPIVVDTHSTVKTPKGYLAGLPKWVLDELNPNMIVVVETTGDEILMRRMSDETRKRDLETASDIEEHQFMNRCAAMTYGVLTGATVKIVKNKNGLLDEGVEELVSILRY.

10–18 (GVPGVGGTT) serves as a coordination point for ATP.

The protein belongs to the archaeal adenylate kinase family. As to quaternary structure, monomer.

It is found in the cytoplasm. The catalysed reaction is AMP + ATP = 2 ADP. This chain is Adenylate kinase, found in Methanococcus aeolicus (strain ATCC BAA-1280 / DSM 17508 / OCM 812 / Nankai-3).